The chain runs to 113 residues: Beta-defensin 112 (113 aa).

3 cysteine pairs are disulfide-bonded: C54-C82, C61-C75, and C65-C83.

Belongs to the beta-defensin family.

Its subcellular location is the secreted. Has antibacterial activity. This chain is Beta-defensin 112 (DEFB112), found in Homo sapiens (Human).